Consider the following 115-residue polypeptide: MKFVLLFGVFLVTLFSYSSAEMLDDFDQAAEDELLSLIEKEEARAKECTPRFYDCSHDRHSCCRSELFKDVCTCFYPEGGDNEVCTCQQPKHLKYMEKAADKAKKFGGKIKKWFG.

A signal peptide spans Met-1–Ala-20. Residues Glu-21–Arg-44 constitute a propeptide that is removed on maturation. 4 disulfide bridges follow: Cys-48-Cys-63, Cys-55-Cys-72, Cys-62-Cys-87, and Cys-74-Cys-85.

Belongs to the neurotoxin 19 (CSTX) family. 01 subfamily. Expressed by the venom gland.

The protein localises to the secreted. This chain is U3-lycotoxin-Ls1a, found in Lycosa singoriensis (Wolf spider).